The chain runs to 605 residues: DNA mismatch repair protein MutL (605 aa).

The protein belongs to the DNA mismatch repair MutL/HexB family.

Its function is as follows. This protein is involved in the repair of mismatches in DNA. It is required for dam-dependent methyl-directed DNA mismatch repair. May act as a 'molecular matchmaker', a protein that promotes the formation of a stable complex between two or more DNA-binding proteins in an ATP-dependent manner without itself being part of a final effector complex. In Exiguobacterium sp. (strain ATCC BAA-1283 / AT1b), this protein is DNA mismatch repair protein MutL.